Reading from the N-terminus, the 305-residue chain is UDP-3-O-acyl-N-acetylglucosamine deacetylase (305 aa).

Zn(2+) is bound by residues histidine 78, histidine 237, and aspartate 241. Histidine 264 (proton donor) is an active-site residue.

This sequence belongs to the LpxC family. It depends on Zn(2+) as a cofactor.

It catalyses the reaction a UDP-3-O-[(3R)-3-hydroxyacyl]-N-acetyl-alpha-D-glucosamine + H2O = a UDP-3-O-[(3R)-3-hydroxyacyl]-alpha-D-glucosamine + acetate. Its pathway is glycolipid biosynthesis; lipid IV(A) biosynthesis; lipid IV(A) from (3R)-3-hydroxytetradecanoyl-[acyl-carrier-protein] and UDP-N-acetyl-alpha-D-glucosamine: step 2/6. Its function is as follows. Catalyzes the hydrolysis of UDP-3-O-myristoyl-N-acetylglucosamine to form UDP-3-O-myristoylglucosamine and acetate, the committed step in lipid A biosynthesis. This Dechloromonas aromatica (strain RCB) protein is UDP-3-O-acyl-N-acetylglucosamine deacetylase.